A 346-amino-acid chain; its full sequence is Zinc finger CCCH domain-containing protein 28 (346 aa).

The tract at residues 1-99 (MASAETPNPD…SPRYPDGKRR (99 aa)) is disordered. The segment covering 17-41 (DAAAAADPAAAAPAAAATDPAAAGS) has biased composition (low complexity). A compositionally biased stretch (basic residues) spans 62–86 (RSSRSRSRSPRRGRSRSRSRSRSRG). 6 C3H1-type zinc fingers span residues 103-131 (DLNVEVCRDFLRDRCARADIECKYAHPHP), 138-165 (DSKVTACADSLRNNCFRGRTCRYYHPPP), 181-209 (KVKMQVCRDFTRGRCSRSANECRFLHHSP), 211-237 (EDCAIVCQDFLRGRCDRKSCRYSHVMA), 282-308 (NYGVEVCRDYLKNMCNRESCRFAHPDL), and 314-340 (NTQVEVCRDFKRGECNRPACRFYHPPA).

The polypeptide is Zinc finger CCCH domain-containing protein 28 (Oryza sativa subsp. japonica (Rice)).